We begin with the raw amino-acid sequence, 208 residues long: 2-phospho-L-lactate guanylyltransferase (208 aa).

The protein belongs to the CofC family. As to quaternary structure, homodimer.

The enzyme catalyses (2S)-2-phospholactate + GTP + H(+) = (2S)-lactyl-2-diphospho-5'-guanosine + diphosphate. The protein operates within cofactor biosynthesis; coenzyme F420 biosynthesis. Functionally, guanylyltransferase that catalyzes the activation of (2S)-2-phospholactate (2-PL) as (2S)-lactyl-2-diphospho-5'-guanosine, via the condensation of 2-PL with GTP. It is involved in the biosynthesis of coenzyme F420, a hydride carrier cofactor. In Methanosarcina acetivorans (strain ATCC 35395 / DSM 2834 / JCM 12185 / C2A), this protein is 2-phospho-L-lactate guanylyltransferase.